The sequence spans 166 residues: uncharacterized protein (166 aa).

Transmembrane regions (helical) follow at residues 7 to 27, 30 to 50, 69 to 89, and 92 to 112; these read VLFK…SLFY, FLFA…YCYI, IETL…KSLL, and NSFF…LVLF.

It to M.jannaschii MJ0795.1 and MJ0785.1.

Its subcellular location is the cell membrane. This is an uncharacterized protein from Methanocaldococcus jannaschii (strain ATCC 43067 / DSM 2661 / JAL-1 / JCM 10045 / NBRC 100440) (Methanococcus jannaschii).